The sequence spans 430 residues: Tapasin (430 aa).

The N-terminal stretch at 1–15 is a signal peptide; sequence MAAGLRLLLAGLCWS. At 16-399 the chain is on the lumenal side; sequence QFRVEDAASP…TEGPHLEDIT (384 aa). Cysteines 34 and 99 form a disulfide. The tract at residues 61–128 is disordered; sequence GDAETPPEPG…PDARSPPTAG (68 aa). Asn-78 carries an N-linked (GlcNAc...) asparagine glycan. Residues 101–111 are compositionally biased toward polar residues; the sequence is LNPTNPQTGSD. 2 consecutive Ig-like C1-type domains span residues 139–273 and 278–382; these read PQYG…LQLH and PKVT…MRVS. An intrachain disulfide couples Cys-299 to Cys-368. Residues 316-342 form a disordered region; the sequence is RAGGSGTSQSPRDTVMDSWTSGHRQAA. Positions 322-338 are enriched in polar residues; sequence TSQSPRDTVMDSWTSGH. Residues 400-417 traverse the membrane as a helical segment; it reads GLFLVAFVLCGLIRWLYP. At 418-430 the chain is on the cytoplasmic side; sequence KAARPKEETKKSQ.

In terms of assembly, interacts with TAP1 and is thus a subunit of the TAP complex. Interaction with TAP1 is TAP2 independent and is required for efficient peptide-TAP interaction. Obligatory mediator for the interaction between newly assembled MHC class I molecules, calreticulin, ERp57 and TAP. Up to 4 MHC class I/tapasin complexes bind to 1 TAP.

It is found in the endoplasmic reticulum membrane. In terms of biological role, involved in the association of MHC class I with transporter associated with antigen processing (TAP) and in the assembly of MHC class I with peptide (peptide loading). The chain is Tapasin (TAPBP) from Gallus gallus (Chicken).